A 147-amino-acid chain; its full sequence is Hemoglobin subunit beta-M (147 aa).

At Val-2 the chain carries N-acetylvaline. The Globin domain occupies 3-147 (HLTSEEKNCI…VAHALAHKYH (145 aa)). Residue Thr-13 is modified to Phosphothreonine. Phosphoserine is present on Ser-45. At Lys-60 the chain carries N6-acetyllysine. His-64 provides a ligand contact to heme b. An N6-acetyllysine modification is found at Lys-83. Position 93 (His-93) interacts with heme b. Cys-94 is subject to S-nitrosocysteine. N6-acetyllysine is present on Lys-145.

The protein belongs to the globin family. In terms of assembly, heterotetramer of two alpha chains and two beta chains. As to expression, red blood cells.

Involved in oxygen transport from the lung to the various peripheral tissues. In Didelphis virginiana (North American opossum), this protein is Hemoglobin subunit beta-M (HBB).